Here is a 435-residue protein sequence, read N- to C-terminus: MSEFRQATDAFASNPAESKQEIRNYTMNFGPQHPAAHGVLRLILEMDGETVVRADPHIGLLHRGTEKLAESKPFNQSVPYMDRLDYVSMMCNEHAYVRAIESLMGIEAPERAQYIRTMFDEITRIKNHLMWVGSNALDLGAMAVMLYAFREREELMDVYEAVSGARMHAAYYRPGGVYRDLPDRMPRYKESRWHKGGALKKLNAAREGSMLDFLEDFTNTFPLRVDEYETLLTDNRIWKQRTVDVGIISPDLARAWGMTGPMLRGSGIEWDLRKKQPYAKYDAVDFDIPVGTNGDCYDRYLVRVAEMRESNRIIKQCVKWLKANPGPVMVTNFKVAPPSREGMKDDMEALIHHFKLFSEGYCVPAGETYSAVEAPKGEFGCYLMSDGANKPFRVHLRAPGFAHLSSMDAVVRGYLLADVVAMIGTYDLVFGEVDR.

The protein belongs to the complex I 49 kDa subunit family. In terms of assembly, NDH-1 is composed of 14 different subunits. Subunits NuoB, C, D, E, F, and G constitute the peripheral sector of the complex.

The protein resides in the cell inner membrane. It carries out the reaction a quinone + NADH + 5 H(+)(in) = a quinol + NAD(+) + 4 H(+)(out). Its function is as follows. NDH-1 shuttles electrons from NADH, via FMN and iron-sulfur (Fe-S) centers, to quinones in the respiratory chain. The immediate electron acceptor for the enzyme in this species is believed to be ubiquinone. Couples the redox reaction to proton translocation (for every two electrons transferred, four hydrogen ions are translocated across the cytoplasmic membrane), and thus conserves the redox energy in a proton gradient. The protein is NADH-quinone oxidoreductase subunit D of Xanthomonas oryzae pv. oryzae (strain MAFF 311018).